The sequence spans 364 residues: D-alanine--D-alanine ligase (364 aa).

Positions Lys146–Leu352 constitute an ATP-grasp domain. Thr179–Glu234 provides a ligand contact to ATP. 3 residues coordinate Mg(2+): Asp305, Glu319, and Asn321.

The protein belongs to the D-alanine--D-alanine ligase family. Mg(2+) is required as a cofactor. Requires Mn(2+) as cofactor.

Its subcellular location is the cytoplasm. The catalysed reaction is 2 D-alanine + ATP = D-alanyl-D-alanine + ADP + phosphate + H(+). The protein operates within cell wall biogenesis; peptidoglycan biosynthesis. In terms of biological role, cell wall formation. The protein is D-alanine--D-alanine ligase of Chlorobaculum parvum (strain DSM 263 / NCIMB 8327) (Chlorobium vibrioforme subsp. thiosulfatophilum).